Here is a 258-residue protein sequence, read N- to C-terminus: Imidazole glycerol phosphate synthase subunit HisF (258 aa).

Residues Asp-11 and Asp-130 contribute to the active site.

Belongs to the HisA/HisF family. As to quaternary structure, heterodimer of HisH and HisF.

It is found in the cytoplasm. It carries out the reaction 5-[(5-phospho-1-deoxy-D-ribulos-1-ylimino)methylamino]-1-(5-phospho-beta-D-ribosyl)imidazole-4-carboxamide + L-glutamine = D-erythro-1-(imidazol-4-yl)glycerol 3-phosphate + 5-amino-1-(5-phospho-beta-D-ribosyl)imidazole-4-carboxamide + L-glutamate + H(+). It functions in the pathway amino-acid biosynthesis; L-histidine biosynthesis; L-histidine from 5-phospho-alpha-D-ribose 1-diphosphate: step 5/9. Functionally, IGPS catalyzes the conversion of PRFAR and glutamine to IGP, AICAR and glutamate. The HisF subunit catalyzes the cyclization activity that produces IGP and AICAR from PRFAR using the ammonia provided by the HisH subunit. This Methylobacterium nodulans (strain LMG 21967 / CNCM I-2342 / ORS 2060) protein is Imidazole glycerol phosphate synthase subunit HisF.